Here is a 498-residue protein sequence, read N- to C-terminus: Putative antiporter subunit mnhD2 (498 aa).

Transmembrane regions (helical) follow at residues 2 to 22, 32 to 52, 78 to 98, 108 to 128, 130 to 150, 161 to 181, 209 to 229, 240 to 260, 271 to 291, 308 to 328, 330 to 350, 369 to 389, 403 to 423, and 451 to 471; these read LSNL…ILVF, YLYL…LIYV, LSLI…AYGF, YHLP…FLTS, LFNL…LITL, IIYV…IGLL, ISLI…FMWL, LAAL…IRFF, IHPL…IGVI, IGFI…GAIF, LVND…LVYI, FGVA…FSGF, GNYI…YSLF, and ILSI…VVLN.

This sequence belongs to the CPA3 antiporters (TC 2.A.63) subunit D family. May form a heterooligomeric complex that consists of seven subunits: mnhA2, mnhB2, mnhC2, mnhD2, mnhE2, mnhF2 and mnhG2.

The protein resides in the cell membrane. This Staphylococcus aureus (strain JH1) protein is Putative antiporter subunit mnhD2 (mnhD2).